Consider the following 260-residue polypeptide: Uroplakin-1b (260 aa).

Residues 1–12 (MAKDDSSVRCFQ) lie on the Cytoplasmic side of the membrane. Residues 13–38 (GLLIFGNVIVGMCGIALTAECIFFVS) form a helical membrane-spanning segment. Residues 39-60 (DQHSLYPLLEATDNDDIYGAAW) lie on the Extracellular side of the membrane. The chain crosses the membrane as a helical span at residues 61 to 81 (IGMFVGICLFCLSVLGIVGIM). Topologically, residues 82-86 (KSNRK) are cytoplasmic. A helical membrane pass occupies residues 87 to 107 (ILLAYFILMFIVYGFEVASCI). At 108 to 229 (TAATQRDFFT…ELISGPMNRH (122 aa)) the chain is on the extracellular side. A helical transmembrane segment spans residues 230 to 250 (AWGVAWFGFAILCWTFWVLLG). At 251–260 (TMFYWSRIEY) the chain is on the cytoplasmic side.

Belongs to the tetraspanin (TM4SF) family. In terms of assembly, heterodimer with uroplakin-3A (UPK3A) or uroplakin-3B (UPK3B).

Its subcellular location is the membrane. Functionally, component of the asymmetric unit membrane (AUM); a highly specialized biomembrane elaborated by terminally differentiated urothelial cells. This Neovison vison (American mink) protein is Uroplakin-1b (UPK1B).